Here is a 206-residue protein sequence, read N- to C-terminus: Small ribosomal subunit protein uS4 (206 aa).

Residues 15-46 form a disordered region; that stretch reads MGENIWGRPKSPVNKREYGPGQHGQRRKNKLS. The region spanning 94-154 is the S4 RNA-binding domain; it reads RRLDAIVYRA…EKSRQLALVL (61 aa).

It belongs to the universal ribosomal protein uS4 family. As to quaternary structure, part of the 30S ribosomal subunit. Contacts protein S5. The interaction surface between S4 and S5 is involved in control of translational fidelity.

Its function is as follows. One of the primary rRNA binding proteins, it binds directly to 16S rRNA where it nucleates assembly of the body of the 30S subunit. In terms of biological role, with S5 and S12 plays an important role in translational accuracy. The protein is Small ribosomal subunit protein uS4 of Cereibacter sphaeroides (strain ATCC 17029 / ATH 2.4.9) (Rhodobacter sphaeroides).